Reading from the N-terminus, the 316-residue chain is Cuticle collagen 13 (316 aa).

The first 36 residues, 1–36 (MSEDLKQIAQETESLRKVAFFGIAVSTIATLTAIIA), serve as a signal peptide directing secretion. Low complexity-rich tracts occupy residues 127–157 (SGAA…PGQD) and 183–204 (APGQ…GAAL). The segment at 127 to 316 (SGAAGPAGSP…CPPPRTAPGY (190 aa)) is disordered. Triple-helical region regions lie at residues 128–157 (GAAG…PGQD), 176–202 (GPPG…SGGA), 206–235 (GPPG…PGQV), 240–266 (GTPG…AGSS), and 269–304 (GGPG…EGAC). Residues 205-217 (PGPPGPAGPPGPA) show a composition bias toward pro residues. The segment covering 219-234 (QPGSNGNAGAPGAPGQ) has biased composition (low complexity). Pro residues predominate over residues 241–251 (TPGPAGPPGSP). Composition is skewed to low complexity over residues 256 to 266 (APGQPGQAGSS) and 276 to 295 (DAGA…PGQD). The span at 307–316 (CPPPRTAPGY) shows a compositional bias: pro residues.

The protein belongs to the cuticular collagen family. Collagen polypeptide chains are complexed within the cuticle by disulfide bonds and other types of covalent cross-links.

Its function is as follows. Nematode cuticles are composed largely of collagen-like proteins. The cuticle functions both as an exoskeleton and as a barrier to protect the worm from its environment. The sequence is that of Cuticle collagen 13 (col-13) from Caenorhabditis elegans.